A 207-amino-acid polypeptide reads, in one-letter code: Small ribosomal subunit protein uS4 (207 aa).

The tract at residues 31–55 (KCKLDSKPGQHGRTSGARTSDYGTQ) is disordered. Over residues 42-53 (GRTSGARTSDYG) the composition is skewed to polar residues. One can recognise an S4 RNA-binding domain in the interval 97–160 (SRLDNVVYRM…KKQARIIEAL (64 aa)).

It belongs to the universal ribosomal protein uS4 family. As to quaternary structure, part of the 30S ribosomal subunit. Contacts protein S5. The interaction surface between S4 and S5 is involved in control of translational fidelity.

Its function is as follows. One of the primary rRNA binding proteins, it binds directly to 16S rRNA where it nucleates assembly of the body of the 30S subunit. Functionally, with S5 and S12 plays an important role in translational accuracy. This is Small ribosomal subunit protein uS4 from Burkholderia multivorans (strain ATCC 17616 / 249).